An 88-amino-acid polypeptide reads, in one-letter code: Small ribosomal subunit protein bS18 (88 aa).

Belongs to the bacterial ribosomal protein bS18 family. Part of the 30S ribosomal subunit. Forms a tight heterodimer with protein bS6.

Its function is as follows. Binds as a heterodimer with protein bS6 to the central domain of the 16S rRNA, where it helps stabilize the platform of the 30S subunit. The polypeptide is Small ribosomal subunit protein bS18 (Aliarcobacter butzleri (strain RM4018) (Arcobacter butzleri)).